A 391-amino-acid polypeptide reads, in one-letter code: 8-amino-7-oxononanoate synthase (391 aa).

Arg20 contributes to the substrate binding site. 106 to 107 is a pyridoxal 5'-phosphate binding site; it reads GY. His131 lines the substrate pocket. Pyridoxal 5'-phosphate-binding residues include Ser178, His206, and Thr234. At Lys237 the chain carries N6-(pyridoxal phosphate)lysine. Residue Thr353 participates in substrate binding.

It belongs to the class-II pyridoxal-phosphate-dependent aminotransferase family. BioF subfamily. In terms of assembly, homodimer. Requires pyridoxal 5'-phosphate as cofactor.

It carries out the reaction 6-carboxyhexanoyl-[ACP] + L-alanine + H(+) = (8S)-8-amino-7-oxononanoate + holo-[ACP] + CO2. It participates in cofactor biosynthesis; biotin biosynthesis. In terms of biological role, catalyzes the decarboxylative condensation of pimeloyl-[acyl-carrier protein] and L-alanine to produce 8-amino-7-oxononanoate (AON), [acyl-carrier protein], and carbon dioxide. This is 8-amino-7-oxononanoate synthase from Trichlorobacter lovleyi (strain ATCC BAA-1151 / DSM 17278 / SZ) (Geobacter lovleyi).